A 492-amino-acid polypeptide reads, in one-letter code: GDP-Man:Man(3)GlcNAc(2)-PP-Dol alpha-1,2-mannosyltransferase (492 aa).

The Lumenal segment spans residues 1–19; that stretch reads MAAGERSWCLCKLLRFFYS. The helical transmembrane segment at 20–40 threads the bilayer; that stretch reads LFFPGLIVCGTLCVCLVIVLW. Residues 41-233 lie on the Cytoplasmic side of the membrane; the sequence is GIRLLLQRKK…TRNPFLSKVK (193 aa). The helical intramembrane region spans 234–254; that stretch reads LIYYYLFAFIYGLVGSCSDVV. Residues 255 to 399 are Cytoplasmic-facing; the sequence is MVNSSWTLNH…IGLHTMWNEH (145 aa). Positions 400-420 form an intramembrane region, helical; that stretch reads FGIGVVECMAAGTIILAHNSG. The Cytoplasmic segment spans residues 421–492; it reads GPKLDIVVPH…FLSSVEKLFK (72 aa).

This sequence belongs to the glycosyltransferase group 1 family. Glycosyltransferase 4 subfamily.

The protein resides in the endoplasmic reticulum membrane. It catalyses the reaction an alpha-D-Man-(1-&gt;3)-[alpha-D-Man-(1-&gt;6)]-beta-D-Man-(1-&gt;4)-beta-D-GlcNAc-(1-&gt;4)-alpha-D-GlcNAc-diphospho-di-trans,poly-cis-dolichol + 2 GDP-alpha-D-mannose = an alpha-D-Man-(1-&gt;2)-alpha-D-Man-(1-&gt;2)-alpha-D-Man-(1-&gt;3)-[alpha-D-Man-(1-&gt;6)]-beta-D-Man-(1-&gt;4)-beta-D-GlcNAc-(1-&gt;4)-alpha-D-GlcNAc-diphospho-di-trans,poly-cis-dolichol + 2 GDP + 2 H(+). The protein operates within protein modification; protein glycosylation. In terms of biological role, GDP-Man:Man(3)GlcNAc(2)-PP-Dol alpha-1,2-mannosyltransferase that operates in the biosynthetic pathway of dolichol-linked oligosaccharides, the glycan precursors employed in protein asparagine (N)-glycosylation. The assembly of dolichol-linked oligosaccharides begins on the cytosolic side of the endoplasmic reticulum membrane and finishes in its lumen. The sequential addition of sugars to dolichol pyrophosphate produces dolichol-linked oligosaccharides containing fourteen sugars, including two GlcNAcs, nine mannoses and three glucoses. Once assembled, the oligosaccharide is transferred from the lipid to nascent proteins by oligosaccharyltransferases. Catalyzes, on the cytoplasmic face of the endoplasmic reticulum, the addition of the fourth and fifth mannose residues to the dolichol-linked oligosaccharide chain, to produce Man(5)GlcNAc(2)-PP-dolichol core oligosaccharide. Man(5)GlcNAc(2)-PP-dolichol is a substrate for ALG3, the following enzyme in the biosynthetic pathway. In Homo sapiens (Human), this protein is GDP-Man:Man(3)GlcNAc(2)-PP-Dol alpha-1,2-mannosyltransferase.